We begin with the raw amino-acid sequence, 377 residues long: Peroxisomal membrane protein PEX14 (377 aa).

Residues 1–15 (MASSEQAEQPSQPSS) are compositionally biased toward low complexity. Residues 1–24 (MASSEQAEQPSQPSSTPGSENVLP) form a disordered region. Ala2 bears the N-acetylalanine mark. Topologically, residues 2–108 (ASSEQAEQPS…YSPAGSRWRD (107 aa)) are peroxisomal matrix. N6-acetyllysine is present on Lys34. A helical membrane pass occupies residues 109 to 126 (YGALAIIMAGIAFGFHQL). Residues 127-377 (YKKYLLPLIL…EGASNESERD (251 aa)) lie on the Cytoplasmic side of the membrane. A disordered region spans residues 230-377 (PPSPSAPKIP…EGASNESERD (148 aa)). Ser232 carries the post-translational modification Phosphoserine. Composition is skewed to low complexity over residues 244 to 259 (PVKS…VNHH) and 265 to 275 (SPVSNESTSSS). A phosphoserine mark is found at Ser282 and Ser335. Positions 323 to 342 (KEDEEDEEDDDVSHVDEEDC) are enriched in acidic residues. Over residues 360–377 (QVEKLRRPEGASNESERD) the composition is skewed to basic and acidic residues.

This sequence belongs to the peroxin-14 family. Interacts with PEX13; forming the PEX13-PEX14 docking complex. Interacts with PEX5 (via WxxxF/Y motifs). Interacts with PEX19. Interacts with tubulin.

The protein localises to the peroxisome membrane. Functionally, component of the PEX13-PEX14 docking complex, a translocon channel that specifically mediates the import of peroxisomal cargo proteins bound to PEX5 receptor. The PEX13-PEX14 docking complex forms a large import pore which can be opened to a diameter of about 9 nm. Mechanistically, PEX5 receptor along with cargo proteins associates with the PEX14 subunit of the PEX13-PEX14 docking complex in the cytosol, leading to the insertion of the receptor into the organelle membrane with the concomitant translocation of the cargo into the peroxisome matrix. Plays a key role for peroxisome movement through a direct interaction with tubulin. The chain is Peroxisomal membrane protein PEX14 from Homo sapiens (Human).